The primary structure comprises 155 residues: Telokin-like protein 20 homolog (155 aa).

Residues 109-155 form a disordered region; sequence KRAVAPPHHEPEPVPAEEGAVADRAEPESGDAPPSPKKQKLDEREQD.

This chain is Telokin-like protein 20 homolog, found in Orgyia pseudotsugata multicapsid polyhedrosis virus (OpMNPV).